Consider the following 699-residue polypeptide: Nucleolar and coiled-body phosphoprotein 1 (699 aa).

The 33-residue stretch at 10-42 (VPSDLYPLVLGFLRDNQLSEVANKFAKATGATQ) folds into the LisH domain. An N6-acetyllysine modification is found at Lys33. The interval 65–637 (ERKLQANGPV…VREEEIEVDS (573 aa)) is disordered. Glycyl lysine isopeptide (Lys-Gly) (interchain with G-Cter in SUMO2) cross-links involve residues Lys67 and Lys76. An Acidic serine cluster 1 repeat occupies 84–95 (SSDSEDSSEEEE). The tract at residues 84-566 (SSDSEDSSEE…GKAAKNSEEE (483 aa)) is 11 X 12 AA approximate repeats of an acidic serine cluster. A compositionally biased stretch (acidic residues) spans 86-97 (DSEDSSEEEEEV). Phosphoserine is present on residues Ser87, Ser90, and Ser91. Ser91 carries the post-translational modification Diphosphoserine. The segment covering 100–110 (PPAKKAAVPAK) has biased composition (low complexity). The Acidic serine cluster 2 repeat unit spans residues 125-136 (ESSSSEESSDDD). A compositionally biased stretch (low complexity) spans 144–159 (QPVQKGVKPQAKAAKA). An Acidic serine cluster 3 repeat occupies 167–178 (SDSDSDSSSEDE). A Glycyl lysine isopeptide (Lys-Gly) (interchain with G-Cter in SUMO2) cross-link involves residue Lys186. A Phosphothreonine modification is found at Thr188. A Glycyl lysine isopeptide (Lys-Gly) (interchain with G-Cter in SUMO2) cross-link involves residue Lys193. Composition is skewed to low complexity over residues 193–227 (KAQT…SSSS) and 236–261 (AATP…TTPT). The tract at residues 204–382 (RAAPKIANGK…DDEAPSKPAG (179 aa)) is interaction with RPA194. Residues 221 to 232 (SSSSSSSDDSEE) form an Acidic serine cluster 4 repeat. The Acidic serine cluster 5 repeat unit spans residues 264-275 (SSSSEDSSSDEE). Residues 291–301 (SVPPPSAPPPK) are compositionally biased toward pro residues. Over residues 321 to 333 (SSEDSSDESDSSS) the composition is skewed to acidic residues. Residues 325 to 336 (SSDESDSSSEEE) form an Acidic serine cluster 6 repeat. Glycyl lysine isopeptide (Lys-Gly) (interchain with G-Cter in SUMO2) cross-links involve residues Lys342 and Lys347. Phosphoserine occurs at positions 362, 363, and 366. Residues 363–375 (SDSSDSDSSEDDE) form an Acidic serine cluster 7 repeat. Acidic residues predominate over residues 366 to 375 (SDSDSSEDDE). Over residues 381–397 (AGTTKNSSNKPAVTTKS) the composition is skewed to polar residues. Residues Lys390 and Lys396 each participate in a glycyl lysine isopeptide (Lys-Gly) (interchain with G-Cter in SUMO2) cross-link. Ser397 is modified (phosphoserine). The span at 398 to 409 (PAVKPAAAPKQP) shows a compositional bias: low complexity. Residues Lys401 and Lys407 each participate in a glycyl lysine isopeptide (Lys-Gly) (interchain with G-Cter in SUMO2) cross-link. Position 415 is an N6-acetyllysine; alternate (Lys415). A Glycyl lysine isopeptide (Lys-Gly) (interchain with G-Cter in SUMO1); alternate cross-link involves residue Lys415. A Glycyl lysine isopeptide (Lys-Gly) (interchain with G-Cter in SUMO2); alternate cross-link involves residue Lys415. The Acidic serine cluster 8 repeat unit spans residues 425 to 436 (SSEEESSSSEEE). Glycyl lysine isopeptide (Lys-Gly) (interchain with G-Cter in SUMO2) cross-links involve residues Lys440 and Lys452. Low complexity-rich tracts occupy residues 441–476 (MVAT…SDSS) and 498–523 (AGGA…SSSD). Ser456 is subject to Phosphoserine. An Acidic serine cluster 9 repeat occupies 470–481 (SSDSDSSSSEEE). A Glycyl lysine isopeptide (Lys-Gly) (interchain with G-Cter in SUMO2) cross-link involves residue Lys505. Residue Ser508 is modified to Phosphoserine. The stretch at 519–529 (SSSSDDSSEEE) is one Acidic serine cluster 10 repeat. At Ser538 the chain carries Phosphoserine. Polar residues predominate over residues 547-556 (NGTSALTAQN). The stretch at 555-566 (QNGKAAKNSEEE) is one Acidic serine cluster 11 repeat. A Phosphoserine modification is found at Ser563. Lys572 is covalently cross-linked (Glycyl lysine isopeptide (Lys-Gly) (interchain with G-Cter in SUMO1)). Residue Lys579 forms a Glycyl lysine isopeptide (Lys-Gly) (interchain with G-Cter in SUMO2) linkage. Phosphoserine is present on residues Ser580 and Ser582. Lys604 participates in a covalent cross-link: Glycyl lysine isopeptide (Lys-Gly) (interchain with G-Cter in SUMO2). Thr607 and Thr610 each carry phosphothreonine. Residue Lys613 forms a Glycyl lysine isopeptide (Lys-Gly) (interchain with G-Cter in SUMO2) linkage. Ser622 is modified (phosphoserine). Residues 627–637 (RVREEEIEVDS) are compositionally biased toward basic and acidic residues. Ser643 is modified (phosphoserine). Lys647 participates in a covalent cross-link: Glycyl lysine isopeptide (Lys-Gly) (interchain with G-Cter in SUMO2). At Lys663 the chain carries N6-acetyllysine; alternate. A Glycyl lysine isopeptide (Lys-Gly) (interchain with G-Cter in SUMO2); alternate cross-link involves residue Lys663. An Omega-N-methylarginine modification is found at Arg683. Ser686 carries the post-translational modification Phosphoserine. A Glycyl lysine isopeptide (Lys-Gly) (interchain with G-Cter in SUMO2) cross-link involves residue Lys695. Position 698 is a phosphoserine (Ser698).

This sequence belongs to the NOLC1 family. Heterodimer; heterodimerizes with TCOF1 following monoubiquitination. Interacts with RNA polymerase I 194 kDa subunit (RPA194) and with casein kinase-II. Interacts with DKC1/NAP57, NOP58 and fibrillarin. In terms of processing, undergoes rapid and massive phosphorylation/dephosphorylation cycles on CK2 and PKC sites. NOLC1 is one of the mostly phosphorylated proteins in the cell. Post-translationally, ubiquitinated. Monoubiquitination by the BCR(KBTBD8) complex promotes the formation of a NOLC1-TCOF1 complex that acts as a platform to connect RNA polymerase I with enzymes responsible for ribosomal processing and modification, leading to remodel the translational program of differentiating cells in favor of neural crest specification. Pyrophosphorylated by 5-diphosphoinositol pentakisphosphate (5-IP7). Serine pyrophosphorylation is achieved by Mg(2+)-dependent, but enzyme independent transfer of a beta-phosphate from a inositol pyrophosphate to a pre-phosphorylated serine residue.

It localises to the nucleus. The protein resides in the nucleolus. The protein localises to the cytoplasm. Functionally, nucleolar protein that acts as a regulator of RNA polymerase I by connecting RNA polymerase I with enzymes responsible for ribosomal processing and modification. Required for neural crest specification: following monoubiquitination by the BCR(KBTBD8) complex, associates with TCOF1 and acts as a platform to connect RNA polymerase I with enzymes responsible for ribosomal processing and modification, leading to remodel the translational program of differentiating cells in favor of neural crest specification. Involved in nucleologenesis, possibly by playing a role in the maintenance of the fundamental structure of the fibrillar center and dense fibrillar component in the nucleolus. It has intrinsic GTPase and ATPase activities. The sequence is that of Nucleolar and coiled-body phosphoprotein 1 from Homo sapiens (Human).